We begin with the raw amino-acid sequence, 1450 residues long: MSSVAVPFYQRRHKHFDQSYRNIQTRYVLEEYAARKAASRQAAHYESTGLGKTTCRLCARRARSLAHEAMQESRKRTHEQKSHASDEKRIKFASELSSLEREIHMARHHAREQLDRLAIQRMVEENMALERHVVEEKISRAPEILVRLRSHTVWEKMSVRLCFTVQGFPSPVVQWYKNEELITPASDPAKYSVENKYGVHVLHINRADFDDSATYSAVATNIHGQASTNCAVVVRRFRESEEPHPAGIMPFHLPLSYDVCFTHFDVQFLEKFGVTFATEGETLTLKCSVLVTPELKRLRPRAEWYRDDVLIKDSKWTKLYFGEGQAALSFTHLNKDDEGLYTLRMVTKGGVNECSAFLFVRDADALIAGAPGAPMDVKCHDANRDYVIVTWKPPNTTSQNPVIGYFVDKCEVGLENWVQCNDAPVKICKYPVTGLYEGRSYIFRVRAVNSAGISRPSRVSEPVAALDPVDLERTQTVHVDEGRKIVISKDDLEGDIQIPGPPTNVHASEISKTYVVLSWDPPVPRGREPLTYFIEKSMVGSGSWQRVNAQVAVKSPRYAVFDLAEGKPYVFRVLSANKHGISDPSEITEPIQPQDIVVVPSAPGRVVATRNTKTSVVVQWDKPKHEENLYGYYIDYSVVGSNQWEPANHKPINYNRFVVHGLETGEQYIFRVKAVNAVGFSENSQESEAIKVQAALTCPSYPHGITLLNCDGHSMTLGWKAPKYSGGSPILGYYIDKREANHKNWHEVNSSVISRTIYTVEDLTEDAFYEFKIAAANVVGIGHPSDPSEHFKCKAWTMPEPGPAYDLTVCEVRNTSLVLLWKAPVYEGKSPITGYLVDYKEVDTEDWITANEKPTSHRYFKVTDLHQGHTYVFKVRAVNDAGVGKSSEISEPVFVEASPGTKEIFSGVDEEGNIYLGFECKEATDASHFLWGKSYEEIEDSDKFKIETKGDHSKLYFKHPDKSDLGTYCISVSDTDGVSSSFVLDEEELERLMTLSNEIKNPTIPLKSELAYEVLDKGEVRFWIQAESLSPNSTYRFVINDKEVENGDRHKISCDHSNGIIEMVMDKFTIDNEGTYTVQIQDGKAKNQSSLVLIGDAFKAILAESELQRKEFLRKQGPHFSEFLYWEVTEECEVLLACKIANTKKETVFKWYRNGSGIDVDEAPDLQKGECHLTVPKLSRKDEGVYKATLSDDRGHDVSTLELSGKVYNDIILALSRVSGKTASPLKILCTEEGIRLQCFLKYYNEEMKVTWSHRESKISSGEKMKIGGGEDVAWLQITEPTEKDKGNYTFEIFSDKESFKRTLDLSGQAFDDALTEFQRLKAAAFAEKNRGKVIGGLPDVVTIMDGKTLNLTCTVFGNPDPEVVWFKNDKALELNEHYLVSLEQGKYASLTIKGVTSEDSGKYSIYVKNKYGGETVDVTVSVYRHGEKIPEVNQGQLAKPRLIPPSSST.

The tract at residues 66–87 is disordered; it reads AHEAMQESRKRTHEQKSHASDE. Ig-like C2-type domains lie at 142–233 and 254–359; these read PEIL…CAVV and PLSY…AFLF. Fibronectin type-III domains lie at 373 to 468, 501 to 596, 602 to 695, 698 to 800, and 803 to 900; these read APMD…ALDP, PPTN…PQDI, APGR…VQAA, CPSY…TMPE, and PAYD…ASPG. Ig-like C2-type domains lie at 899–995, 1002–1115, 1118–1204, 1225–1322, and 1333–1422; these read PGTK…LMTL, PTIP…FLRK, PHFS…LELS, PLKI…QRLK, and KVIG…VTVS.

In terms of tissue distribution, expressed in pectoralis and cardiac muscle.

In terms of biological role, is a structural constituent of myofibrillar M-band in striated muscle. This Gallus gallus (Chicken) protein is M-protein, striated muscle.